A 494-amino-acid chain; its full sequence is Cardiolipin synthase (494 aa).

2 helical membrane passes run 14–34 (IILNSIFIGAFILNLLFAFTI) and 45–65 (IWAWLLVLVFLPLFGFILYLL). PLD phosphodiesterase domains follow at residues 229–256 (MNNRNHRKIVVIDGQIGYVGGFNVGDEY) and 407–434 (DNGFLHSKTLVIDDEIASVGTANMDHRS). Active-site residues include His-234, Lys-236, Asp-241, His-412, Lys-414, and Asp-419.

Belongs to the phospholipase D family. Cardiolipin synthase subfamily.

The protein resides in the cell membrane. The enzyme catalyses 2 a 1,2-diacyl-sn-glycero-3-phospho-(1'-sn-glycerol) = a cardiolipin + glycerol. In terms of biological role, catalyzes the reversible phosphatidyl group transfer from one phosphatidylglycerol molecule to another to form cardiolipin (CL) (diphosphatidylglycerol) and glycerol. The chain is Cardiolipin synthase (cls) from Staphylococcus aureus (strain Mu50 / ATCC 700699).